We begin with the raw amino-acid sequence, 292 residues long: MIRRENRLRREFIFRKSLEEKQKSLEEKREKIRNALENNTKIDYNLRKDAIELAKGSDWGGQQYETDSEYRWAGAQDPKIVITTSRDPSSRLKMFAKEMKLIFPNAQRINRGHYDVKQVVQASKAQDSTDLIIFTETRGNPDGMLVCHLPFGPTAFFSMANVVMRHDIPNCGTMSEQYPHLIFDNLNSKLGHRFTTILKHLFPVPKPDSKRIITFSNSEDYISFRHHVYKTENDGEVELTEAGPRFELKPYQIKLGTLETLAAAEDEWVLRSYTNTARKRTFLSISRADDDE.

Positions 78 to 259 (PKIVITTSRD…PYQIKLGTLE (182 aa)) constitute a Brix domain.

The polypeptide is Brix domain-containing protein ZK795.3 (Caenorhabditis elegans).